A 1049-amino-acid chain; its full sequence is Retinoblastoma-like protein 1 (1049 aa).

Phosphothreonine is present on residues Thr332, Thr369, and Thr385. Residues 385 to 584 (TPVASATQSV…WEALRASANK (200 aa)) form a domain A region. The segment at 385–944 (TPVASATQSV…GRVKSFALKY (560 aa)) is pocket; binds T and E1A. Positions 585 to 779 (VPSCEEVIFP…TQDAPLTGIS (195 aa)) are spacer. Residues Ser640, Ser650, Ser748, and Ser761 each carry the phosphoserine modification. Residues 780 to 944 (KPKRTGSLAL…GRVKSFALKY (165 aa)) form a domain B region. Ser959, Ser970, and Ser983 each carry phosphoserine. A Phosphothreonine modification is found at Thr992. 2 positions are modified to phosphoserine: Ser1004 and Ser1022.

The protein belongs to the retinoblastoma protein (RB) family. Component of the DREAM complex (also named LINC complex) at least composed of E2F4, E2F5, LIN9, LIN37, LIN52, LIN54, MYBL1, MYBL2, RBL1, RBL2, RBBP4, TFDP1 and TFDP2. The complex exists in quiescent cells where it represses cell cycle-dependent genes. It dissociates in S phase when LIN9, LIN37, LIN52 and LIN54 form a subcomplex that binds to MYBL2. Interacts with AATF. Interacts with KDM5A. Interacts with KMT5B and KMT5C. Interacts with USP4. Interacts with RBBP9. Cell-cycle arrest properties are inactivated by phosphorylation on Thr-332, Ser-640, Ser-959 and Ser-970 by CDK4.

The protein localises to the nucleus. Functionally, key regulator of entry into cell division. Directly involved in heterochromatin formation by maintaining overall chromatin structure and, in particular, that of constitutive heterochromatin by stabilizing histone methylation. Recruits and targets histone methyltransferases KMT5B and KMT5C, leading to epigenetic transcriptional repression. Controls histone H4 'Lys-20' trimethylation. Probably acts as a transcription repressor by recruiting chromatin-modifying enzymes to promoters. Potent inhibitor of E2F-mediated trans-activation. May act as a tumor suppressor. In Rattus norvegicus (Rat), this protein is Retinoblastoma-like protein 1.